The chain runs to 196 residues: GTP cyclohydrolase 1 (196 aa).

Zn(2+) is bound by residues cysteine 86, histidine 89, and cysteine 158.

It belongs to the GTP cyclohydrolase I family. Toroid-shaped homodecamer, composed of two pentamers of five dimers.

The catalysed reaction is GTP + H2O = 7,8-dihydroneopterin 3'-triphosphate + formate + H(+). The protein operates within cofactor biosynthesis; 7,8-dihydroneopterin triphosphate biosynthesis; 7,8-dihydroneopterin triphosphate from GTP: step 1/1. The sequence is that of GTP cyclohydrolase 1 from Clostridium botulinum (strain ATCC 19397 / Type A).